Reading from the N-terminus, the 515-residue chain is Histidine ammonia-lyase (515 aa).

Positions Ala-142–Gly-144 form a cross-link, 5-imidazolinone (Ala-Gly). Ser-143 carries the 2,3-didehydroalanine (Ser) modification.

It belongs to the PAL/histidase family. Contains an active site 4-methylidene-imidazol-5-one (MIO), which is formed autocatalytically by cyclization and dehydration of residues Ala-Ser-Gly.

It localises to the cytoplasm. It catalyses the reaction L-histidine = trans-urocanate + NH4(+). Its pathway is amino-acid degradation; L-histidine degradation into L-glutamate; N-formimidoyl-L-glutamate from L-histidine: step 1/3. The polypeptide is Histidine ammonia-lyase (Methylobacterium nodulans (strain LMG 21967 / CNCM I-2342 / ORS 2060)).